A 399-amino-acid chain; its full sequence is F-box/kelch-repeat protein At5g48980 (399 aa).

Positions 1–11 (MADSQRLSTAS) are enriched in polar residues. The segment at 1–29 (MADSQRLSTASGVKDGQPPWKKKKLSNDT) is disordered. In terms of domain architecture, F-box spans 29-75 (TTSNPSLPYDVILIILARVSRSYYTNLSLVSKSFRSILTSPELYKTR). Residues 199-248 (IVYLPGSFESPDSLNCVEVYNTMTQTWKPVPPEKRMFKLENLEKKIYYKS) form a Kelch repeat.

The chain is F-box/kelch-repeat protein At5g48980 from Arabidopsis thaliana (Mouse-ear cress).